A 500-amino-acid chain; its full sequence is MIPVVALVGRPNVGKSTLFNRLTRTRDALVADFPGLTRDRKYGRAKLEEQEFILIDTGGIDGTEQGVETKMAEQSLAAIEEADVVLFMVDGRAGLTSADEAIAKHLRSREKPTFLVVNKIDGIDADAASAEFWQLGMNKVYQIAASHGRGVTSLLELALAPFMEELVEESLKDENGEITDLTEFEDFEDEEKDLTEEDAEKDFARLQDQPIKLAIIGRPNVGKSTLTNRILGEERVVVYDMPGTTRDSIYIPMEREGQEYVLIDTAGVRRRGRINETVEKFSVIKTLKAVEDANVVLLVIDARENISDQDLSLLGFALNAGRSLVIAVNKWDGLDNDVKEKVKSELDRRLGFVDFARIHFISALHGTGVGHLYESVQEAYVSATKRVGTSVLTRIMKMAQDDHQPPLVRGRRVKLKYAHAGGYNPPLIVIHGNQVKELPSSYKRFLMNYYRKSLEIMGTPIRIQFQNSENPFEDRGGKLTMSQERQRKRLLGAVKNRNKK.

EngA-type G domains lie at 3-166 and 211-384; these read PVVA…MEEL and IKLA…VSAT. GTP-binding positions include 9–16, 56–60, 118–121, 217–224, 264–268, and 329–332; these read GRPNVGKS, DTGGI, NKID, DTAGV, and NKWD. The 85-residue stretch at 385–469 folds into the KH-like domain; sequence KRVGTSVLTR…PIRIQFQNSE (85 aa). The disordered stretch occupies residues 468–500; the sequence is SENPFEDRGGKLTMSQERQRKRLLGAVKNRNKK. Positions 486–500 are enriched in basic residues; it reads QRKRLLGAVKNRNKK.

Belongs to the TRAFAC class TrmE-Era-EngA-EngB-Septin-like GTPase superfamily. EngA (Der) GTPase family. As to quaternary structure, associates with the 50S ribosomal subunit.

GTPase that plays an essential role in the late steps of ribosome biogenesis. The protein is GTPase Der of Aliivibrio fischeri (strain ATCC 700601 / ES114) (Vibrio fischeri).